Here is a 220-residue protein sequence, read N- to C-terminus: Probable glutathione S-transferase parA (220 aa).

Residues 4–83 (NNVVLLDFWP…YIDEVWHDKC (80 aa)) enclose the GST N-terminal domain. Glutathione is bound by residues Ser-14, Lys-41, Ile-55, and 67 to 68 (ES). The GST C-terminal domain maps to 89–209 (DPYERSQARF…LPHPHKIYGF (121 aa)).

It belongs to the GST superfamily. HSP26 family.

The enzyme catalyses RX + glutathione = an S-substituted glutathione + a halide anion + H(+). The chain is Probable glutathione S-transferase parA (PARA) from Nicotiana tabacum (Common tobacco).